We begin with the raw amino-acid sequence, 485 residues long: Glutamate--tRNA ligase (485 aa).

A 'HIGH' region motif is present at residues 12–22; it reads PSPTGEPHVGT. Positions 253–257 match the 'KMSKS' region motif; the sequence is KLSKR. Lysine 256 is a binding site for ATP.

Belongs to the class-I aminoacyl-tRNA synthetase family. Glutamate--tRNA ligase type 1 subfamily. Monomer.

Its subcellular location is the cytoplasm. The catalysed reaction is tRNA(Glu) + L-glutamate + ATP = L-glutamyl-tRNA(Glu) + AMP + diphosphate. Catalyzes the attachment of glutamate to tRNA(Glu) in a two-step reaction: glutamate is first activated by ATP to form Glu-AMP and then transferred to the acceptor end of tRNA(Glu). The polypeptide is Glutamate--tRNA ligase (Sinorhizobium medicae (strain WSM419) (Ensifer medicae)).